Reading from the N-terminus, the 1036-residue chain is Multidrug resistance protein MdtC (1036 aa).

10 helical membrane passes run 12–34, 336–353, 360–382, 431–450, 463–485, 528–547, 853–875, 895–917, 949–971, and 986–1008; these read VATT…LLPV, RALV…FLFL, LIPA…LCGF, VGFT…IPLL, FAIT…TPMM, WVLL…YINI, LFLI…ESYI, LELF…IGIV, LRFR…LVLS, and IVGG…YLCF.

The protein belongs to the resistance-nodulation-cell division (RND) (TC 2.A.6) family. MdtC subfamily. Part of a tripartite efflux system composed of MdtA, MdtB and MdtC. MdtC forms a heteromultimer with MdtB.

It localises to the cell inner membrane. The sequence is that of Multidrug resistance protein MdtC from Photorhabdus laumondii subsp. laumondii (strain DSM 15139 / CIP 105565 / TT01) (Photorhabdus luminescens subsp. laumondii).